We begin with the raw amino-acid sequence, 615 residues long: DNA mismatch repair protein MutL (615 aa).

Residues 363 to 397 (FAEPAVREPVAPRYTPAPASGSRPAAPWPNAQPGY) are disordered. Over residues 378 to 391 (PAPASGSRPAAPWP) the composition is skewed to low complexity.

It belongs to the DNA mismatch repair MutL/HexB family.

In terms of biological role, this protein is involved in the repair of mismatches in DNA. It is required for dam-dependent methyl-directed DNA mismatch repair. May act as a 'molecular matchmaker', a protein that promotes the formation of a stable complex between two or more DNA-binding proteins in an ATP-dependent manner without itself being part of a final effector complex. This chain is DNA mismatch repair protein MutL, found in Escherichia coli O157:H7 (strain EC4115 / EHEC).